A 194-amino-acid polypeptide reads, in one-letter code: Imidazoleglycerol-phosphate dehydratase (194 aa).

The protein belongs to the imidazoleglycerol-phosphate dehydratase family.

It localises to the cytoplasm. The catalysed reaction is D-erythro-1-(imidazol-4-yl)glycerol 3-phosphate = 3-(imidazol-4-yl)-2-oxopropyl phosphate + H2O. It functions in the pathway amino-acid biosynthesis; L-histidine biosynthesis; L-histidine from 5-phospho-alpha-D-ribose 1-diphosphate: step 6/9. The sequence is that of Imidazoleglycerol-phosphate dehydratase from Bacillus cereus (strain ZK / E33L).